The chain runs to 362 residues: tRNA-specific 2-thiouridylase MnmA (362 aa).

Residues 6–13 and L32 contribute to the ATP site; that span reads AMSGGVDS. Residue C101 is the Nucleophile of the active site. An intrachain disulfide couples C101 to C197. Residue G125 participates in ATP binding. The interval 147 to 149 is interaction with tRNA; that stretch reads KDQ. The active-site Cysteine persulfide intermediate is C197.

The protein belongs to the MnmA/TRMU family.

It is found in the cytoplasm. The enzyme catalyses S-sulfanyl-L-cysteinyl-[protein] + uridine(34) in tRNA + AH2 + ATP = 2-thiouridine(34) in tRNA + L-cysteinyl-[protein] + A + AMP + diphosphate + H(+). In terms of biological role, catalyzes the 2-thiolation of uridine at the wobble position (U34) of tRNA, leading to the formation of s(2)U34. The chain is tRNA-specific 2-thiouridylase MnmA from Acidothermus cellulolyticus (strain ATCC 43068 / DSM 8971 / 11B).